Here is a 263-residue protein sequence, read N- to C-terminus: Uridylate kinase (263 aa).

29-32 (KVSG) is an ATP binding site. G71 contacts UMP. Residues G72 and R76 each coordinate ATP. UMP is bound by residues D91 and 152–159 (TGNPFFTT). Positions 179, 180, 185, and 188 each coordinate ATP.

Belongs to the UMP kinase family. Homohexamer.

It is found in the cytoplasm. It carries out the reaction UMP + ATP = UDP + ADP. Its pathway is pyrimidine metabolism; CTP biosynthesis via de novo pathway; UDP from UMP (UMPK route): step 1/1. With respect to regulation, inhibited by UTP. In terms of biological role, catalyzes the reversible phosphorylation of UMP to UDP. The polypeptide is Uridylate kinase (Maricaulis maris (strain MCS10) (Caulobacter maris)).